The sequence spans 246 residues: tRNA pseudouridine synthase A (246 aa).

Catalysis depends on Asp-52, which acts as the Nucleophile. Position 111 (Tyr-111) interacts with substrate.

The protein belongs to the tRNA pseudouridine synthase TruA family. As to quaternary structure, homodimer.

It carries out the reaction uridine(38/39/40) in tRNA = pseudouridine(38/39/40) in tRNA. Formation of pseudouridine at positions 38, 39 and 40 in the anticodon stem and loop of transfer RNAs. In Ehrlichia ruminantium (strain Welgevonden), this protein is tRNA pseudouridine synthase A.